The chain runs to 411 residues: Replication factor C subunit 2 (411 aa).

The tract at residues 1 to 36 (MADFFNLKARQQAAAQASSSKTPTSKQESNRLQPWV) is disordered. The span at 11-27 (QQAAAQASSSKTPTSKQ) shows a compositional bias: low complexity. Residues valine 36, arginine 40, 73–81 (GPPGTGKTS), asparagine 195, and arginine 253 each bind ATP.

This sequence belongs to the activator 1 small subunits family. Heteropentamer of subunits RFC1, RFC2, RFC3, RFC4 and RFC5 that forms a complex with PCNA in the presence of ATP.

Its subcellular location is the nucleus. Functionally, the elongation of primed DNA templates by DNA polymerase delta and epsilon requires the action of the accessory proteins proliferating cell nuclear antigen (PCNA) and activator 1. Subunit 2 binds ATP and single-stranded DNA. The protein is Replication factor C subunit 2 (RFC2) of Phaeosphaeria nodorum (strain SN15 / ATCC MYA-4574 / FGSC 10173) (Glume blotch fungus).